Here is a 340-residue protein sequence, read N- to C-terminus: UDP-N-acetylenolpyruvoylglucosamine reductase (340 aa).

Residues 14-185 form the FAD-binding PCMH-type domain; sequence HVEATARWLL…VAVEFNLPLL (172 aa). Arg162 is an active-site residue. Catalysis depends on Ser235, which acts as the Proton donor. Residue Glu332 is part of the active site.

It belongs to the MurB family. It depends on FAD as a cofactor.

The protein resides in the cytoplasm. The catalysed reaction is UDP-N-acetyl-alpha-D-muramate + NADP(+) = UDP-N-acetyl-3-O-(1-carboxyvinyl)-alpha-D-glucosamine + NADPH + H(+). It functions in the pathway cell wall biogenesis; peptidoglycan biosynthesis. Functionally, cell wall formation. The sequence is that of UDP-N-acetylenolpyruvoylglucosamine reductase from Xanthomonas oryzae pv. oryzae (strain KACC10331 / KXO85).